The following is a 573-amino-acid chain: Vacuolar protein 8 (573 aa).

Residues 1-36 (MAASAADRMGRQRMSGLSCSAPPRPTVVTNPGNKQD) are disordered. Positions 27–36 (VVTNPGNKQD) are enriched in polar residues. 9 ARM repeats span residues 60–97 (NRGEVDFFSNGPLRALSTLVYSDNIDLQRSAALAFAEI), 98–137 (TEKDIRPVNRDCLEPVLLLLQNTDPDIQRAASAALGNLAV), 139–178 (NENKVLIVEMGGFEPLIRQMMSPNVEVQCNAVGCITNLAT), 180–219 (EANKSKIARSGALLPLTKLAKSKDMRVQRNATGALLNMTH), 221–260 (DQNRQELVNAGAIPILVSLLSSRDPDVQYYSTTALSNIAV), 264–303 (NRKKLSSSEPRLVEHLIKLMDSGSPRVQCQAALALRNLAS), 305–344 (SDYQLEIVKANGLPHLFNLFQSTHTPLVLAAVACIRNISI), 346–386 (PLNE…NLAA), and 430–469 (DELKGTLLELGIAEVLIPLTLSDNIEVQGNSAAALGNLSS).

The protein belongs to the beta-catenin family.

It localises to the vacuole membrane. Functionally, functions in both vacuole inheritance and protein targeting from the cytoplasm to vacuole. This is Vacuolar protein 8 (VAC8) from Yarrowia lipolytica (strain CLIB 122 / E 150) (Yeast).